Consider the following 151-residue polypeptide: Small ribosomal subunit protein uS15z (151 aa).

The protein belongs to the universal ribosomal protein uS15 family.

The chain is Small ribosomal subunit protein uS15z (RPS13A) from Arabidopsis thaliana (Mouse-ear cress).